Consider the following 610-residue polypeptide: V-type proton ATPase catalytic subunit A (610 aa).

Position 245-252 (245-252 (GAFGCGKT)) interacts with ATP.

Belongs to the ATPase alpha/beta chains family. As to quaternary structure, V-ATPase is a heteromultimeric enzyme composed of a peripheral catalytic V1 complex (main components: subunits A, B, C, D, E, and F) attached to an integral membrane V0 proton pore complex (main component: the proteolipid protein).

It catalyses the reaction ATP + H2O + 4 H(+)(in) = ADP + phosphate + 5 H(+)(out). Functionally, catalytic subunit of the peripheral V1 complex of vacuolar ATPase. V-ATPase vacuolar ATPase is responsible for acidifying a variety of intracellular compartments in eukaryotic cells. The protein is V-type proton ATPase catalytic subunit A of Trypanosoma congolense.